Here is a 176-residue protein sequence, read N- to C-terminus: ATP synthase subunit delta (176 aa).

It belongs to the ATPase delta chain family. As to quaternary structure, F-type ATPases have 2 components, F(1) - the catalytic core - and F(0) - the membrane proton channel. F(1) has five subunits: alpha(3), beta(3), gamma(1), delta(1), epsilon(1). F(0) has three main subunits: a(1), b(2) and c(10-14). The alpha and beta chains form an alternating ring which encloses part of the gamma chain. F(1) is attached to F(0) by a central stalk formed by the gamma and epsilon chains, while a peripheral stalk is formed by the delta and b chains.

The protein localises to the cell inner membrane. In terms of biological role, f(1)F(0) ATP synthase produces ATP from ADP in the presence of a proton or sodium gradient. F-type ATPases consist of two structural domains, F(1) containing the extramembraneous catalytic core and F(0) containing the membrane proton channel, linked together by a central stalk and a peripheral stalk. During catalysis, ATP synthesis in the catalytic domain of F(1) is coupled via a rotary mechanism of the central stalk subunits to proton translocation. This protein is part of the stalk that links CF(0) to CF(1). It either transmits conformational changes from CF(0) to CF(1) or is implicated in proton conduction. The chain is ATP synthase subunit delta from Campylobacter concisus (strain 13826).